The sequence spans 784 residues: Cyclin-dependent kinase 11B (784 aa).

A compositionally biased stretch (basic and acidic residues) spans 18-60 (QEKKRRKEQEEKAEIKRLKNSDDRDSKRDSLEEGELRDHRMEI). Residues 18-401 (QEKKRRKEQE…EGDYVPDSPA (384 aa)) form a disordered region. Phosphoserine occurs at positions 47 and 72. Positions 95-113 (EKAHHRKDEKRKEKRRHRS) are enriched in basic residues. Basic and acidic residues-rich tracts occupy residues 114 to 131 (HSAE…EREH), 138 to 227 (REEQ…DKGK), and 238 to 263 (PPRE…RDLL). The residue at position 115 (Ser115) is a Phosphoserine. Ser270 bears the Phosphoserine mark. The span at 278-289 (SAESSSAESGSG) shows a compositional bias: low complexity. Acidic residues-rich tracts occupy residues 290 to 353 (SEEE…EDRE) and 372 to 381 (DSEEGEEEVG). A Protein kinase domain is found at 427–712 (FQCLNRIEEG…AEDGLKHEYF (286 aa)). ATP is bound by residues 433 to 441 (IEEGTYGVV) and Lys456. Ser471 carries the phosphoserine; by CDK7 modification. At Thr477 the chain carries Phosphothreonine; by CDK7. The active-site Proton acceptor is the Asp551. Position 578 is a phosphoserine (Ser578). At Tyr583 the chain carries Phosphotyrosine. Thr584 carries the phosphothreonine modification. Lys630 participates in a covalent cross-link: Glycyl lysine isopeptide (Lys-Gly) (interchain with G-Cter in SUMO2). The segment at 722-784 (SMFPTWPAKS…AAGPGFSLKF (63 aa)) is disordered. Residue Thr740 is modified to Phosphothreonine. Position 741 is a phosphoserine (Ser741).

Belongs to the protein kinase superfamily. CMGC Ser/Thr protein kinase family. CDC2/CDKX subfamily. May interact PAK1 and RANBP9. p110C interacts with RNPS1. Interacts with CCND3. Interacts with CCNL1 and CCNL2. Forms complexes with pre-mRNA-splicing factors, including at least SRSF1, SRSF2 AND SRSF7/SLU7. The cofactor is Mg(2+). Phosphorylation at Ser-115 creates a binding site for 14-3-3 proteins.

The enzyme catalyses L-seryl-[protein] + ATP = O-phospho-L-seryl-[protein] + ADP + H(+). It carries out the reaction L-threonyl-[protein] + ATP = O-phospho-L-threonyl-[protein] + ADP + H(+). Phosphorylation at Thr-437 or Tyr-438 inactivates the enzyme, while phosphorylation at Thr-584 activates it. Functionally, plays multiple roles in cell cycle progression, cytokinesis and apoptosis. Involved in pre-mRNA splicing in a kinase activity-dependent manner. May act as a negative regulator of normal cell cycle progression. This Mus musculus (Mouse) protein is Cyclin-dependent kinase 11B (Cdk11b).